The chain runs to 534 residues: Serine protease vicPb (534 aa).

The signal sequence occupies residues 1–17 (MLRYLLIPILYLQVVLG). N-linked (GlcNAc...) asparagine glycosylation is found at asparagine 34, asparagine 65, and asparagine 126. Serine 174 acts as the Charge relay system in catalysis. 5 N-linked (GlcNAc...) asparagine glycosylation sites follow: asparagine 297, asparagine 335, asparagine 352, asparagine 415, and asparagine 437. Aspartate 451 serves as the catalytic Charge relay system.

The protein belongs to the peptidase S28 family.

It functions in the pathway mycotoxin biosynthesis. Its function is as follows. Serine protease, part of the gene cluster that mediates the biosynthesis of the secondary metabolite victorin, the molecular basis for Victoria blight of oats. Within the pathway, vicPa and vicPb are probably involved in the processing of the vicA1 and vicA2 precursors. The pathway starts with the processing of the precursor vicA1 by several endopeptidases including kexin proteases as well as the cluster-specific S28 family peptidases vicPa and vicPb to produce 7 identical copies of the hexapeptide Gly-Leu-Lys-Leu-Ala-Phe. After being excised from the precursor peptide, the core peptides are cyclized and modified post-translationally by enzymes encoded within the gene cluster. The ustYa family oxidase vicYb is required for the formation of the macrocycle in victorin and the copper amine oxidases (CAOs) vicK1 and vicK2 are responsible for converting victorin to the active form by oxidizing the N-terminal glycyl residue in the peptides to glyoxylate. Relaxed substrate specificity of enzymes in the victorin biosynthetic pathway results in a metabolic grid that produces a set of analogs including victorinines B, C, E or HV-toxin M. This is Serine protease vicPb from Bipolaris victoriae (strain FI3) (Victoria blight of oats agent).